The following is a 282-amino-acid chain: NH(3)-dependent NAD(+) synthetase (282 aa).

ATP is bound at residue 51–58 (GISGGVDS). D57 contributes to the Mg(2+) binding site. R148 contacts deamido-NAD(+). T168 contacts ATP. E173 serves as a coordination point for Mg(2+). Positions 181 and 188 each coordinate deamido-NAD(+). K197 and T219 together coordinate ATP. 268 to 269 (HK) serves as a coordination point for deamido-NAD(+).

This sequence belongs to the NAD synthetase family. Homodimer.

The catalysed reaction is deamido-NAD(+) + NH4(+) + ATP = AMP + diphosphate + NAD(+) + H(+). The protein operates within cofactor biosynthesis; NAD(+) biosynthesis; NAD(+) from deamido-NAD(+) (ammonia route): step 1/1. In terms of biological role, catalyzes the ATP-dependent amidation of deamido-NAD to form NAD. Uses ammonia as a nitrogen source. This is NH(3)-dependent NAD(+) synthetase from Burkholderia cenocepacia (strain HI2424).